We begin with the raw amino-acid sequence, 231 residues long: Putative N-acetylmannosamine-6-phosphate 2-epimerase (231 aa).

The protein belongs to the NanE family.

It carries out the reaction an N-acyl-D-glucosamine 6-phosphate = an N-acyl-D-mannosamine 6-phosphate. It participates in amino-sugar metabolism; N-acetylneuraminate degradation; D-fructose 6-phosphate from N-acetylneuraminate: step 3/5. Its function is as follows. Converts N-acetylmannosamine-6-phosphate (ManNAc-6-P) to N-acetylglucosamine-6-phosphate (GlcNAc-6-P). The polypeptide is Putative N-acetylmannosamine-6-phosphate 2-epimerase (Listeria monocytogenes serotype 4b (strain F2365)).